The sequence spans 89 residues: Small ribosomal subunit protein uS19 (89 aa).

The protein belongs to the universal ribosomal protein uS19 family.

Functionally, protein S19 forms a complex with S13 that binds strongly to the 16S ribosomal RNA. The polypeptide is Small ribosomal subunit protein uS19 (Xylella fastidiosa (strain M12)).